Reading from the N-terminus, the 188-residue chain is Elongation factor P (188 aa).

An N6-(3,6-diaminohexanoyl)-5-hydroxylysine modification is found at Lys34.

It belongs to the elongation factor P family. May be beta-lysylated on the epsilon-amino group of Lys-34 by the combined action of EpmA and EpmB, and then hydroxylated on the C5 position of the same residue by EpmC (if this protein is present). Lysylation is critical for the stimulatory effect of EF-P on peptide-bond formation. The lysylation moiety may extend toward the peptidyltransferase center and stabilize the terminal 3-CCA end of the tRNA. Hydroxylation of the C5 position on Lys-34 may allow additional potential stabilizing hydrogen-bond interactions with the P-tRNA.

Its subcellular location is the cytoplasm. It participates in protein biosynthesis; polypeptide chain elongation. Involved in peptide bond synthesis. Alleviates ribosome stalling that occurs when 3 or more consecutive Pro residues or the sequence PPG is present in a protein, possibly by augmenting the peptidyl transferase activity of the ribosome. Modification of Lys-34 is required for alleviation. This Methylococcus capsulatus (strain ATCC 33009 / NCIMB 11132 / Bath) protein is Elongation factor P.